The primary structure comprises 775 residues: Polyribonucleotide nucleotidyltransferase (775 aa).

Positions 487 and 493 each coordinate Mg(2+). A KH domain is found at 554–613; sequence PKVEVVDVPEEKAPLIIGPGGSTVKKIYDETGVKVWVGEQGKVYLFVFPGGDVEKAKQMI. S1 motif domains lie at 623-693 and 707-775; these read GAVY…IGIE and GDVY…TDDV.

The protein belongs to the polyribonucleotide nucleotidyltransferase family. It depends on Mg(2+) as a cofactor.

The protein localises to the cytoplasm. The catalysed reaction is RNA(n+1) + phosphate = RNA(n) + a ribonucleoside 5'-diphosphate. Its function is as follows. Involved in mRNA degradation. Catalyzes the phosphorolysis of single-stranded polyribonucleotides processively in the 3'- to 5'-direction. The sequence is that of Polyribonucleotide nucleotidyltransferase from Aquifex aeolicus (strain VF5).